Reading from the N-terminus, the 334-residue chain is Thiamine thiazole synthase (334 aa).

Residues cysteine 86, 107–108, glycine 115, and valine 183 contribute to the substrate site; that span reads EA. Cysteine 221 is modified (2,3-didehydroalanine (Cys)). Substrate-binding positions include aspartate 223, histidine 238, methionine 290, and 300–302; that span reads RMG.

The protein belongs to the THI4 family. In terms of assembly, homooctamer. The cofactor is Fe cation. In terms of processing, during the catalytic reaction, a sulfide is transferred from Cys-221 to a reaction intermediate, generating a dehydroalanine residue.

The protein localises to the cytoplasm. The protein resides in the nucleus. It carries out the reaction [ADP-thiazole synthase]-L-cysteine + glycine + NAD(+) = [ADP-thiazole synthase]-dehydroalanine + ADP-5-ethyl-4-methylthiazole-2-carboxylate + nicotinamide + 3 H2O + 2 H(+). Involved in biosynthesis of the thiamine precursor thiazole. Catalyzes the conversion of NAD and glycine to adenosine diphosphate 5-(2-hydroxyethyl)-4-methylthiazole-2-carboxylic acid (ADT), an adenylated thiazole intermediate. The reaction includes an iron-dependent sulfide transfer from a conserved cysteine residue of the protein to a thiazole intermediate. The enzyme can only undergo a single turnover, which suggests it is a suicide enzyme. May have additional roles in adaptation to various stress conditions and in DNA damage tolerance. The polypeptide is Thiamine thiazole synthase (Ajellomyces capsulatus (strain G186AR / H82 / ATCC MYA-2454 / RMSCC 2432) (Darling's disease fungus)).